The following is a 258-amino-acid chain: MLILISPAKTLDYQSPLTTTRYTLPELLDNAQQLIHEARKLTPPQISSLMRISDKLAGINAARFHDWQPNFTPENARQAILAFKGDVYTGLQAETFSEDDFDFAQQHLRMISGLYGVLRPLDLMQPYRLEMGIRLENARGKDLYQFWGDIITNKLNEALAAQGDNVVINLASDEYFKSVKPKKLNAEIIKPVFLDEKNGKFKIISFYAKKARGLMSRFIIENRLTKPEQLTGFNSEGYFFDEASSSNGELVFKRYEQR.

This sequence belongs to the UPF0246 family.

In Escherichia coli (strain UTI89 / UPEC), this protein is UPF0246 protein YaaA.